A 714-amino-acid chain; its full sequence is Cadherin-13 (714 aa).

An N-terminal signal peptide occupies residues 1–22; sequence MQPRTPLTLCVLLSQVLLVTSA. Positions 23 to 138 are excised as a propeptide; that stretch reads DDLECTPGFQ…RTSPVPRQKR (116 aa). 5 Cadherin domains span residues 143 to 245, 246 to 363, 364 to 477, 478 to 585, and 586 to 680; these read SPIL…RPIF, REGP…SPKF, TKKE…GPVF, YPDP…APVI, and YPTV…VQVC. Residues 156 to 183 are disordered; it reads PRDVGKVVDSDRPEGSKFRLTGKGVDQD. Residues 158 to 172 show a composition bias toward basic and acidic residues; that stretch reads DVGKVVDSDRPEGSK. N-linked (GlcNAc...) asparagine glycans are attached at residues N382, N489, N500, N530, N598, N638, and N671. G693 carries the GPI-anchor amidated glycine lipid modification. Positions 694 to 714 are cleaved as a propeptide — removed in mature form; the sequence is ALHLSLSLLLLFSLLSLLSGL.

As to quaternary structure, by contrast to classical cadherins, homodimerization in trans is not mediated by cadherin EC1 domain strand-swapping, but instead through a homophilic adhesive interface which joins two elongated EC1-EC2 domains through a region near their Ca2+-binding sites to form a tetrahedral, X-like shape.

It is found in the cell membrane. Its subcellular location is the cytoplasm. Functionally, cadherins are calcium-dependent cell adhesion proteins. They preferentially interact with themselves in a homophilic manner in connecting cells; cadherins may thus contribute to the sorting of heterogeneous cell types. May act as a negative regulator of neural cell growth. In Mus musculus (Mouse), this protein is Cadherin-13 (Cdh13).